Reading from the N-terminus, the 140-residue chain is Aspartate 1-decarboxylase (140 aa).

S25 functions as the Schiff-base intermediate with substrate; via pyruvic acid in the catalytic mechanism. S25 bears the Pyruvic acid (Ser) mark. Substrate is bound at residue T57. The active-site Proton donor is the Y58. 73-75 (GAA) lines the substrate pocket.

It belongs to the PanD family. Heterooctamer of four alpha and four beta subunits. The cofactor is pyruvate. In terms of processing, is synthesized initially as an inactive proenzyme, which is activated by self-cleavage at a specific serine bond to produce a beta-subunit with a hydroxyl group at its C-terminus and an alpha-subunit with a pyruvoyl group at its N-terminus.

Its subcellular location is the cytoplasm. The catalysed reaction is L-aspartate + H(+) = beta-alanine + CO2. It functions in the pathway cofactor biosynthesis; (R)-pantothenate biosynthesis; beta-alanine from L-aspartate: step 1/1. In terms of biological role, catalyzes the pyruvoyl-dependent decarboxylation of aspartate to produce beta-alanine. This chain is Aspartate 1-decarboxylase, found in Persephonella marina (strain DSM 14350 / EX-H1).